The chain runs to 475 residues: UDP-N-acetylmuramate--L-alanine ligase (475 aa).

125-131 contributes to the ATP binding site; it reads GTHGKTT.

The protein belongs to the MurCDEF family.

It localises to the cytoplasm. The enzyme catalyses UDP-N-acetyl-alpha-D-muramate + L-alanine + ATP = UDP-N-acetyl-alpha-D-muramoyl-L-alanine + ADP + phosphate + H(+). Its pathway is cell wall biogenesis; peptidoglycan biosynthesis. In terms of biological role, cell wall formation. In Actinobacillus pleuropneumoniae serotype 5b (strain L20), this protein is UDP-N-acetylmuramate--L-alanine ligase.